We begin with the raw amino-acid sequence, 618 residues long: Dihydroxy-acid dehydratase (618 aa).

A Mg(2+)-binding site is contributed by D81. Position 122 (C122) interacts with [2Fe-2S] cluster. 2 residues coordinate Mg(2+): D123 and K124. K124 bears the N6-carboxylysine mark. C197 contributes to the [2Fe-2S] cluster binding site. Residue E493 coordinates Mg(2+). Residue S519 is the Proton acceptor of the active site.

Belongs to the IlvD/Edd family. In terms of assembly, homodimer. [2Fe-2S] cluster is required as a cofactor. Requires Mg(2+) as cofactor.

The catalysed reaction is (2R)-2,3-dihydroxy-3-methylbutanoate = 3-methyl-2-oxobutanoate + H2O. The enzyme catalyses (2R,3R)-2,3-dihydroxy-3-methylpentanoate = (S)-3-methyl-2-oxopentanoate + H2O. It participates in amino-acid biosynthesis; L-isoleucine biosynthesis; L-isoleucine from 2-oxobutanoate: step 3/4. It functions in the pathway amino-acid biosynthesis; L-valine biosynthesis; L-valine from pyruvate: step 3/4. In terms of biological role, functions in the biosynthesis of branched-chain amino acids. Catalyzes the dehydration of (2R,3R)-2,3-dihydroxy-3-methylpentanoate (2,3-dihydroxy-3-methylvalerate) into 2-oxo-3-methylpentanoate (2-oxo-3-methylvalerate) and of (2R)-2,3-dihydroxy-3-methylbutanoate (2,3-dihydroxyisovalerate) into 2-oxo-3-methylbutanoate (2-oxoisovalerate), the penultimate precursor to L-isoleucine and L-valine, respectively. In Bordetella avium (strain 197N), this protein is Dihydroxy-acid dehydratase.